A 191-amino-acid chain; its full sequence is Large ribosomal subunit protein uL5 (191 aa).

Belongs to the universal ribosomal protein uL5 family. In terms of assembly, part of the 50S ribosomal subunit; part of the 5S rRNA/L5/L18/L25 subcomplex. Contacts the 5S rRNA and the P site tRNA. Forms a bridge to the 30S subunit in the 70S ribosome.

Its function is as follows. This is one of the proteins that bind and probably mediate the attachment of the 5S RNA into the large ribosomal subunit, where it forms part of the central protuberance. In the 70S ribosome it contacts protein S13 of the 30S subunit (bridge B1b), connecting the 2 subunits; this bridge is implicated in subunit movement. Contacts the P site tRNA; the 5S rRNA and some of its associated proteins might help stabilize positioning of ribosome-bound tRNAs. The chain is Large ribosomal subunit protein uL5 from Thermobifida fusca (strain YX).